The primary structure comprises 353 residues: Tsukushi (353 aa).

The signal sequence occupies residues 1–17; it reads MLCTLFLLLLALGIVQT. Positions 18 to 59 constitute an LRRNT domain; it reads TRPCFPGCQCEEETFGLFDSFSLIRVDCSSLGPHIVPVPIPL. 10 LRR repeats span residues 60-80, 86-107, 110-131, 133-154, 160-180, 186-207, 208-228, 231-253, 256-277, and 281-302; these read DTAH…SVLG, TLAG…AFSR, YLES…VFTS, PLSD…AFTT, ALHV…PARA, TIQS…RDLP, LRYL…AFMG, GLTH…GFRE, GLQV…EVFS, and LLQE…LLHH. An N-linked (GlcNAc...) asparagine glycan is attached at N75. N138 carries an N-linked (GlcNAc...) asparagine glycan. Residue N191 is glycosylated (N-linked (GlcNAc...) asparagine).

As to quaternary structure, interacts with FZD4 (via FZ domain); competes with WNT2B for binding to FZD4, inhibiting Wnt signaling and repressing peripheral eye development. Interacts with TGFB1; the interaction contributes to regulation of the hair cycle. Interacts with netrin. Interacts with CCN2. Expressed at high levels in the liver, small intestine and placenta. Not or barely detectable in other tissues, including whole pancreas, adipose tissues, skeletal muscle, kidney, spleen, brain, lung and testis.

It localises to the secreted. Its function is as follows. Contributes to various developmental events and other processes such as wound healing and cholesterol homeostasis through its interactions with multiple signaling pathways. Wnt signaling inhibitor which competes with WNT2B for binding to Wnt receptor FZD4 and represses WNT2B-dependent development of the peripheral eye. Plays a role in regulating the hair cycle by controlling TGFB1 signaling. Required for the development of the anterior commissure in the brain by inhibiting neurite outgrowth. Essential for terminal differentiation of hippocampal neural stem cells. Plays a role in regulating bone elongation and bone mass by modulating growth plate chondrocyte function and overall body size. Required for development of the inner ear through its involvement in stereocilia formation in inner hair cells. Facilitates wound healing by inhibiting secretion of TGFB1 from macrophages which prevents myofibroblast differentiation, maintaining inflammatory cell quiescence. Plays a role in cholesterol homeostasis by reducing circulating high-density lipoprotein cholesterol, lowering cholesterol efflux capacity and decreasing cholesterol-to-bile acid conversion in the liver. In one study, shown to negatively regulate sympathetic innervation in brown fat, leading to reduced energy expenditure. In another study, shown not to affect brown fat thermogenic capacity, body weight gain or glucose homeostasis. The polypeptide is Tsukushi (Tsku) (Rattus norvegicus (Rat)).